A 289-amino-acid chain; its full sequence is GTPase Era (289 aa).

In terms of domain architecture, Era-type G spans 2-167 (KSGFVSLIGR…LREIAKLLPE (166 aa)). A G1 region spans residues 10 to 17 (GRTNAGKS). 10–17 (GRTNAGKS) is a GTP binding site. The G2 stretch occupies residues 36 to 40 (NATRR). The G3 stretch occupies residues 57–60 (DTPG). Residues 57 to 61 (DTPGL) and 116 to 119 (TKTD) contribute to the GTP site. The segment at 116-119 (TKTD) is G4. The segment at 146–148 (VNI) is G5. One can recognise a KH type-2 domain in the interval 186–274 (YRDFILESVY…HLNLQIFVKK (89 aa)).

This sequence belongs to the TRAFAC class TrmE-Era-EngA-EngB-Septin-like GTPase superfamily. Era GTPase family. In terms of assembly, monomer.

The protein resides in the cytoplasm. The protein localises to the cell inner membrane. Functionally, an essential GTPase that binds both GDP and GTP, with rapid nucleotide exchange. Plays a role in 16S rRNA processing and 30S ribosomal subunit biogenesis and possibly also in cell cycle regulation and energy metabolism. The sequence is that of GTPase Era from Campylobacter hominis (strain ATCC BAA-381 / DSM 21671 / CCUG 45161 / LMG 19568 / NCTC 13146 / CH001A).